Here is a 101-residue protein sequence, read N- to C-terminus: Large ribosomal subunit protein uL23 (101 aa).

Belongs to the universal ribosomal protein uL23 family. Part of the 50S ribosomal subunit. Contacts protein L29, and trigger factor when it is bound to the ribosome.

In terms of biological role, one of the early assembly proteins it binds 23S rRNA. One of the proteins that surrounds the polypeptide exit tunnel on the outside of the ribosome. Forms the main docking site for trigger factor binding to the ribosome. The chain is Large ribosomal subunit protein uL23 from Histophilus somni (strain 129Pt) (Haemophilus somnus).